Consider the following 321-residue polypeptide: Ferredoxin--NADP reductase (321 aa).

Positions 34, 42, 47, 87, 119, 278, and 319 each coordinate FAD.

It belongs to the ferredoxin--NADP reductase type 2 family. As to quaternary structure, homodimer. The cofactor is FAD.

It carries out the reaction 2 reduced [2Fe-2S]-[ferredoxin] + NADP(+) + H(+) = 2 oxidized [2Fe-2S]-[ferredoxin] + NADPH. This Streptococcus pneumoniae serotype 4 (strain ATCC BAA-334 / TIGR4) protein is Ferredoxin--NADP reductase.